A 131-amino-acid polypeptide reads, in one-letter code: MAAARKTNTRKRRVKKNIESGIAHIRSTFNNTIVTITDVHGNALSWSSAGALGFKGSKKSTPFAAQMAAETAAKGSIEHGLKTLEVTVKGPGSGREAAIRALQAAGLEVTAIRDVTPVPHNGCRPPKRRRV.

The protein belongs to the universal ribosomal protein uS11 family. As to quaternary structure, part of the 30S ribosomal subunit. Interacts with proteins S7 and S18. Binds to IF-3.

In terms of biological role, located on the platform of the 30S subunit, it bridges several disparate RNA helices of the 16S rRNA. Forms part of the Shine-Dalgarno cleft in the 70S ribosome. The sequence is that of Small ribosomal subunit protein uS11 from Bacillus licheniformis (strain ATCC 14580 / DSM 13 / JCM 2505 / CCUG 7422 / NBRC 12200 / NCIMB 9375 / NCTC 10341 / NRRL NRS-1264 / Gibson 46).